The sequence spans 338 residues: tRNA N6-adenosine threonylcarbamoyltransferase (338 aa).

His-114 and His-118 together coordinate Fe cation. Residues 136–140, Asp-169, Gly-182, Asp-186, and Asn-275 each bind substrate; that span reads LVSGG. Asp-301 contacts Fe cation.

This sequence belongs to the KAE1 / TsaD family. Fe(2+) is required as a cofactor.

The protein resides in the cytoplasm. The enzyme catalyses L-threonylcarbamoyladenylate + adenosine(37) in tRNA = N(6)-L-threonylcarbamoyladenosine(37) in tRNA + AMP + H(+). Required for the formation of a threonylcarbamoyl group on adenosine at position 37 (t(6)A37) in tRNAs that read codons beginning with adenine. Is involved in the transfer of the threonylcarbamoyl moiety of threonylcarbamoyl-AMP (TC-AMP) to the N6 group of A37, together with TsaE and TsaB. TsaD likely plays a direct catalytic role in this reaction. This is tRNA N6-adenosine threonylcarbamoyltransferase from Streptococcus equi subsp. equi (strain 4047).